The chain runs to 374 residues: Anhydro-N-acetylmuramic acid kinase (374 aa).

12-19 (GTSLDGID) serves as a coordination point for ATP.

The protein belongs to the anhydro-N-acetylmuramic acid kinase family.

It catalyses the reaction 1,6-anhydro-N-acetyl-beta-muramate + ATP + H2O = N-acetyl-D-muramate 6-phosphate + ADP + H(+). It functions in the pathway amino-sugar metabolism; 1,6-anhydro-N-acetylmuramate degradation. The protein operates within cell wall biogenesis; peptidoglycan recycling. Its function is as follows. Catalyzes the specific phosphorylation of 1,6-anhydro-N-acetylmuramic acid (anhMurNAc) with the simultaneous cleavage of the 1,6-anhydro ring, generating MurNAc-6-P. Is required for the utilization of anhMurNAc either imported from the medium or derived from its own cell wall murein, and thus plays a role in cell wall recycling. In Klebsiella pneumoniae subsp. pneumoniae (strain ATCC 700721 / MGH 78578), this protein is Anhydro-N-acetylmuramic acid kinase.